A 374-amino-acid polypeptide reads, in one-letter code: Biotin synthase (374 aa).

One can recognise a Radical SAM core domain in the interval 51 to 278 (NTVKVNYLVN…DTEIRIAGGR (228 aa)). [4Fe-4S] cluster is bound by residues cysteine 66, cysteine 70, and cysteine 73. [2Fe-2S] cluster-binding residues include cysteine 110, cysteine 143, cysteine 203, and arginine 273. The disordered stretch occupies residues 346–374 (IAGGTSVAGSAPDPAIRRRGAGTDVPANA).

It belongs to the radical SAM superfamily. Biotin synthase family. As to quaternary structure, homodimer. [4Fe-4S] cluster serves as cofactor. The cofactor is [2Fe-2S] cluster.

It catalyses the reaction (4R,5S)-dethiobiotin + (sulfur carrier)-SH + 2 reduced [2Fe-2S]-[ferredoxin] + 2 S-adenosyl-L-methionine = (sulfur carrier)-H + biotin + 2 5'-deoxyadenosine + 2 L-methionine + 2 oxidized [2Fe-2S]-[ferredoxin]. Its pathway is cofactor biosynthesis; biotin biosynthesis; biotin from 7,8-diaminononanoate: step 2/2. Its function is as follows. Catalyzes the conversion of dethiobiotin (DTB) to biotin by the insertion of a sulfur atom into dethiobiotin via a radical-based mechanism. This is Biotin synthase from Nocardioides sp. (strain ATCC BAA-499 / JS614).